An 898-amino-acid polypeptide reads, in one-letter code: Putative aconitate hydratase, cytoplasmic (898 aa).

Substrate-binding positions include Gln90 and 209-211 (DSH). [4Fe-4S] cluster-binding residues include Cys441, Cys507, and Cys510. Substrate is bound by residues Arg540, Arg545, Arg703, and 784 to 785 (SR).

It belongs to the aconitase/IPM isomerase family. [4Fe-4S] cluster is required as a cofactor.

The protein localises to the cytoplasm. It catalyses the reaction citrate = D-threo-isocitrate. The protein operates within carbohydrate metabolism; glyoxylate and dicarboxylate metabolism. Catalyzes the isomerization of citrate to isocitrate via cis-aconitate. The protein is Putative aconitate hydratase, cytoplasmic of Oryza sativa subsp. japonica (Rice).